The following is a 162-amino-acid chain: ATVPLTMDGLDLQKVAGTWHSMAMAASDISLLDSEYAPLRVYVQELRPTPRDNLEIILRKWEQKRCVQKKILAQKTELPAEFKISYLDENELIVLDTDYENYLFFCLENADAPGQNLVCQCLTRTLKADNEVMEKFDRALQTLPVDVRLFFDPTQVAEQCRI.

Cystine bridges form between Cys66–Cys160 and Cys106–Cys119.

It belongs to the calycin superfamily. Lipocalin family. In terms of assembly, monomer.

The protein localises to the secreted. Functionally, lactoglobulin is the primary component of whey, it binds retinol and is probably involved in the transport of that molecule. This is Beta-lactoglobulin-3 (LGB3) from Felis catus (Cat).